Here is a 364-residue protein sequence, read N- to C-terminus: tRNA 2-selenouridine synthase (364 aa).

The Rhodanese domain occupies 14–137; that stretch reads LIADTPIIDV…LRQTAIQATI (124 aa). Cysteine 97 functions as the S-selanylcysteine intermediate in the catalytic mechanism.

The protein belongs to the SelU family. Monomer.

The catalysed reaction is 5-methylaminomethyl-2-thiouridine(34) in tRNA + selenophosphate + (2E)-geranyl diphosphate + H2O + H(+) = 5-methylaminomethyl-2-selenouridine(34) in tRNA + (2E)-thiogeraniol + phosphate + diphosphate. It carries out the reaction 5-methylaminomethyl-2-thiouridine(34) in tRNA + (2E)-geranyl diphosphate = 5-methylaminomethyl-S-(2E)-geranyl-thiouridine(34) in tRNA + diphosphate. The enzyme catalyses 5-methylaminomethyl-S-(2E)-geranyl-thiouridine(34) in tRNA + selenophosphate + H(+) = 5-methylaminomethyl-2-(Se-phospho)selenouridine(34) in tRNA + (2E)-thiogeraniol. It catalyses the reaction 5-methylaminomethyl-2-(Se-phospho)selenouridine(34) in tRNA + H2O = 5-methylaminomethyl-2-selenouridine(34) in tRNA + phosphate. In terms of biological role, involved in the post-transcriptional modification of the uridine at the wobble position (U34) of tRNA(Lys), tRNA(Glu) and tRNA(Gln). Catalyzes the conversion of 2-thiouridine (S2U-RNA) to 2-selenouridine (Se2U-RNA). Acts in a two-step process involving geranylation of 2-thiouridine (S2U) to S-geranyl-2-thiouridine (geS2U) and subsequent selenation of the latter derivative to 2-selenouridine (Se2U) in the tRNA chain. In Escherichia coli (strain K12 / MC4100 / BW2952), this protein is tRNA 2-selenouridine synthase.